We begin with the raw amino-acid sequence, 318 residues long: NADH-ubiquinone oxidoreductase chain 1 (318 aa).

The next 8 membrane-spanning stretches (helical) occupy residues 3 to 23, 69 to 89, 102 to 122, 144 to 164, 171 to 191, 222 to 242, 253 to 273, and 294 to 314; these read LINLLAMIVPVLLAVAFLTLL, MLFIIAPTLALTLALTMWTPL, MLFILALSSLAVYTIMWSGWA, VTLAIIILSLLLMNGSFTLLS, YIWLLIPSWPLAMMWFISTLA, LFFLAEYANIIMMNALTIILF, ELYTINFTIKTLLFTAFFLWI, and LPLTLVMCMWHVALPIMLAGI.

The protein belongs to the complex I subunit 1 family. In terms of assembly, core subunit of respiratory chain NADH dehydrogenase (Complex I) which is composed of 45 different subunits.

It is found in the mitochondrion inner membrane. The enzyme catalyses a ubiquinone + NADH + 5 H(+)(in) = a ubiquinol + NAD(+) + 4 H(+)(out). In terms of biological role, core subunit of the mitochondrial membrane respiratory chain NADH dehydrogenase (Complex I) which catalyzes electron transfer from NADH through the respiratory chain, using ubiquinone as an electron acceptor. Essential for the catalytic activity and assembly of complex I. This is NADH-ubiquinone oxidoreductase chain 1 (MT-ND1) from Murina suilla (Brown tube-nosed bat).